A 119-amino-acid chain; its full sequence is uncharacterized protein (119 aa).

Residues 80-104 traverse the membrane as a helical segment; it reads VFPLVYLFCVVFQFLSLGCYLSIFF.

It localises to the membrane. This is an uncharacterized protein from Saccharomyces cerevisiae (strain ATCC 204508 / S288c) (Baker's yeast).